The following is a 441-amino-acid chain: Glutamyl-tRNA reductase (441 aa).

Residues 64–67, serine 123, 128–130, and glutamine 134 contribute to the substrate site; these read TCNR and ETQ. The active-site Nucleophile is cysteine 65. 203–208 provides a ligand contact to NADP(+); the sequence is GAGEMI.

Belongs to the glutamyl-tRNA reductase family. As to quaternary structure, homodimer.

It catalyses the reaction (S)-4-amino-5-oxopentanoate + tRNA(Glu) + NADP(+) = L-glutamyl-tRNA(Glu) + NADPH + H(+). Its pathway is porphyrin-containing compound metabolism; protoporphyrin-IX biosynthesis; 5-aminolevulinate from L-glutamyl-tRNA(Glu): step 1/2. In terms of biological role, catalyzes the NADPH-dependent reduction of glutamyl-tRNA(Glu) to glutamate 1-semialdehyde (GSA). In Burkholderia pseudomallei (strain K96243), this protein is Glutamyl-tRNA reductase.